Consider the following 434-residue polypeptide: Nicotinate phosphoribosyltransferase (434 aa).

His-242 bears the Phosphohistidine; by autocatalysis mark.

The protein belongs to the NAPRTase family. Post-translationally, transiently phosphorylated on a His residue during the reaction cycle. Phosphorylation strongly increases the affinity for substrates and increases the rate of nicotinate D-ribonucleotide production. Dephosphorylation regenerates the low-affinity form of the enzyme, leading to product release.

The enzyme catalyses nicotinate + 5-phospho-alpha-D-ribose 1-diphosphate + ATP + H2O = nicotinate beta-D-ribonucleotide + ADP + phosphate + diphosphate. It functions in the pathway cofactor biosynthesis; NAD(+) biosynthesis; nicotinate D-ribonucleotide from nicotinate: step 1/1. In terms of biological role, catalyzes the synthesis of beta-nicotinate D-ribonucleotide from nicotinate and 5-phospho-D-ribose 1-phosphate at the expense of ATP. This Sinorhizobium medicae (strain WSM419) (Ensifer medicae) protein is Nicotinate phosphoribosyltransferase.